The sequence spans 176 residues: MSVNMDELKHQVMINQFVLTAGCAADQAKQLLQAAHWQFETALSTFFQETNIPYSHHHQMMCTPANTPATPPNFPDALTMFSRLKASESFHGGGGSSSPMATSATSPPPHFPHATGSFATPSWPTAASPPGGPQQHQPQPPLWTPAPPSPTSDWPPLAPQQATSEPRAHPAMEAER.

The segment at 87-176 is disordered; that stretch reads SESFHGGGGS…RAHPAMEAER (90 aa). Residues 120–137 are compositionally biased toward low complexity; it reads TPSWPTAASPPGGPQQHQ. Positions 138 to 150 are enriched in pro residues; it reads PQPPLWTPAPPSP. Residues 166–176 show a composition bias toward basic and acidic residues; that stretch reads PRAHPAMEAER.

The protein belongs to the UBALD family.

This is UBA-like domain-containing protein 1 (Ubald1) from Mus musculus (Mouse).